The primary structure comprises 188 residues: Ribosome maturation factor RimM (188 aa).

A PRC barrel domain is found at 98-171; sequence EGEFFQGDLV…RIVIHPPEYV (74 aa).

It belongs to the RimM family. As to quaternary structure, binds ribosomal protein uS19.

The protein resides in the cytoplasm. An accessory protein needed during the final step in the assembly of 30S ribosomal subunit, possibly for assembly of the head region. Essential for efficient processing of 16S rRNA. May be needed both before and after RbfA during the maturation of 16S rRNA. It has affinity for free ribosomal 30S subunits but not for 70S ribosomes. The chain is Ribosome maturation factor RimM from Myxococcus xanthus (strain DK1622).